The sequence spans 350 residues: tRNA U34 carboxymethyltransferase (350 aa).

Carboxy-S-adenosyl-L-methionine contacts are provided by residues K101, W125, K130, G150, 172–174 (DPS), 208–209 (LE), M224, Y228, and R343.

The protein belongs to the class I-like SAM-binding methyltransferase superfamily. CmoB family. As to quaternary structure, homotetramer.

It catalyses the reaction carboxy-S-adenosyl-L-methionine + 5-hydroxyuridine(34) in tRNA = 5-carboxymethoxyuridine(34) in tRNA + S-adenosyl-L-homocysteine + H(+). Its function is as follows. Catalyzes carboxymethyl transfer from carboxy-S-adenosyl-L-methionine (Cx-SAM) to 5-hydroxyuridine (ho5U) to form 5-carboxymethoxyuridine (cmo5U) at position 34 in tRNAs. The protein is tRNA U34 carboxymethyltransferase of Psychrobacter arcticus (strain DSM 17307 / VKM B-2377 / 273-4).